The following is a 290-amino-acid chain: Small ribosomal subunit biogenesis GTPase RsgA (290 aa).

Residues 62 to 213 (KNSLVRPPIV…IADTPGFSSL (152 aa)) enclose the CP-type G domain. Residues 111-114 (SKLD) and 156-164 (GQTGVGKST) contribute to the GTP site. Zn(2+)-binding residues include Cys-237, Cys-242, His-244, and Cys-250.

The protein belongs to the TRAFAC class YlqF/YawG GTPase family. RsgA subfamily. In terms of assembly, monomer. Associates with 30S ribosomal subunit, binds 16S rRNA. Zn(2+) is required as a cofactor.

It is found in the cytoplasm. One of several proteins that assist in the late maturation steps of the functional core of the 30S ribosomal subunit. Helps release RbfA from mature subunits. May play a role in the assembly of ribosomal proteins into the subunit. Circularly permuted GTPase that catalyzes slow GTP hydrolysis, GTPase activity is stimulated by the 30S ribosomal subunit. This is Small ribosomal subunit biogenesis GTPase RsgA from Streptococcus agalactiae serotype V (strain ATCC BAA-611 / 2603 V/R).